The following is a 453-amino-acid chain: Armadillo repeat-containing X-linked protein 1 (453 aa).

Over 1-6 (MGRTRE) the chain is Mitochondrial intermembrane. Mitochondrion outer membrane (MOM)-targeting sequence stretches follow at residues 1–6 (MGRTRE) and 26–36 (RLAWGRDENEK). The helical; Signal-anchor transmembrane segment at 7-29 (AGCVAAGVVIGAGACYCVYRLAW) threads the bilayer. Residues 30 to 453 (GRDENEKIWD…VKVLKVLTKL (424 aa)) lie on the Cytoplasmic side of the membrane. The segment at 140–182 (PSLPCPGGRGGGCHPTRSGSRAGGRASGKSKGKARSKSTRAPA) is disordered. The span at 167–177 (GKSKGKARSKS) shows a compositional bias: basic residues. ARM repeat units follow at residues 195-235 (PYKI…NNAA), 237-276 (SFNQ…NLSV), 358-398 (PAMT…NIND), and 415-453 (SSLF…LTKL).

Belongs to the eutherian X-chromosome-specific Armcx family. Interacts with MIRO1.

The protein localises to the mitochondrion. It is found in the mitochondrion outer membrane. In terms of biological role, regulates mitochondrial transport during axon regeneration. Increases the proportion of motile mitochondria by recruiting stationary mitochondria into the motile pool. Enhances mitochondria movement and neurite growth in both adult axons and embryonic neurons. Promotes neuronal survival and axon regeneration after nerve injury. May link mitochondria to the Trak1-kinesin motor complex via its interaction with MIRO1. This Pongo abelii (Sumatran orangutan) protein is Armadillo repeat-containing X-linked protein 1 (ARMCX1).